The chain runs to 499 residues: MFSSFETLILSFVSLFFMMIFIHSKWISSYSKMAKNLPPSPFGLPIIGNLHQLGMTPYNSLRTLAHKYGSLMLIHLGSVPVIVASSAEAAQEIMKTHDQIFSTRPKMNIASIVSFDAKIVAFSPYGEHWRQSKSVYLLNLLSTKRVQSFRHVREDETNLMLDVIENSCGSEIDLSNMIMSLTNDVVCRIAYGRKYYEDWFKELMKEVMDVLGVFSVGNYVPSLSWIDRLSGLEGRAYKAAKQLDAFLEGVVKQHETKSNESMRDQDVVDILLETQREQASAGTPFHRDTLKALMQEMFIAGTDTTSTAIEWEISEVIKHPRVMKKLQQELDEIAQGRQRITEEDLEDTQHPYLEAILKESMRLHIPVPLLLPREATHDVKVMGYDIAAGTQVLINAWMIARDPTIWEDADEFKPERFLDTNIDYKGLNFELLPFGAGRRGCPGIQFAMSVNKLALANLVYKFDFKLPNGLRLEQLDMTDSTGITVRRKYPLLVIPTARF.

The helical; Signal-anchor for type II membrane protein transmembrane segment at 2–22 threads the bilayer; sequence FSSFETLILSFVSLFFMMIFI. Residue C441 participates in heme binding.

It belongs to the cytochrome P450 family. Heme serves as cofactor.

It localises to the membrane. The catalysed reaction is (+)-costunolide + reduced [NADPH--hemoprotein reductase] + O2 = 3beta-hydroxycostunolide + oxidized [NADPH--hemoprotein reductase] + H2O + H(+). It carries out the reaction parthenolide + reduced [NADPH--hemoprotein reductase] + O2 = 3beta-hydroxyparthenolide + oxidized [NADPH--hemoprotein reductase] + H2O + H(+). It participates in secondary metabolite biosynthesis; terpenoid biosynthesis. Its function is as follows. Involved in the biosynthesis of germacrene-derived sesquiterpene lactones. Component of the parthenolide biosynthetic pathway; parthenolide and conjugates are promising anti-cancer drugs highly active against colon cancer cells. Catalyzes the conversion of costunolide and parthenolide to 3-beta-hydroxycostunolide and 3-beta-hydroxyparthenolide, respectively. The sequence is that of 3-beta-hydroxylase from Tanacetum parthenium (Feverfew).